Consider the following 424-residue polypeptide: Serine--tRNA ligase (424 aa).

L-serine is bound at residue 232–234 (TAE). 263 to 265 (RQE) lines the ATP pocket. Residue glutamate 286 participates in L-serine binding. 350–353 (EIGS) serves as a coordination point for ATP. An L-serine-binding site is contributed by serine 386.

It belongs to the class-II aminoacyl-tRNA synthetase family. Type-1 seryl-tRNA synthetase subfamily. Homodimer. The tRNA molecule binds across the dimer.

It localises to the cytoplasm. It carries out the reaction tRNA(Ser) + L-serine + ATP = L-seryl-tRNA(Ser) + AMP + diphosphate + H(+). The enzyme catalyses tRNA(Sec) + L-serine + ATP = L-seryl-tRNA(Sec) + AMP + diphosphate + H(+). It functions in the pathway aminoacyl-tRNA biosynthesis; selenocysteinyl-tRNA(Sec) biosynthesis; L-seryl-tRNA(Sec) from L-serine and tRNA(Sec): step 1/1. Catalyzes the attachment of serine to tRNA(Ser). Is also able to aminoacylate tRNA(Sec) with serine, to form the misacylated tRNA L-seryl-tRNA(Sec), which will be further converted into selenocysteinyl-tRNA(Sec). The sequence is that of Serine--tRNA ligase from Aster yellows witches'-broom phytoplasma (strain AYWB).